The primary structure comprises 102 residues: Small ribosomal subunit protein uS10 (102 aa).

Belongs to the universal ribosomal protein uS10 family. In terms of assembly, part of the 30S ribosomal subunit.

Its function is as follows. Involved in the binding of tRNA to the ribosomes. This Streptococcus uberis (strain ATCC BAA-854 / 0140J) protein is Small ribosomal subunit protein uS10.